The following is a 235-amino-acid chain: Small ribosomal subunit protein uS2 (235 aa).

This sequence belongs to the universal ribosomal protein uS2 family.

The chain is Small ribosomal subunit protein uS2 from Caldanaerobacter subterraneus subsp. tengcongensis (strain DSM 15242 / JCM 11007 / NBRC 100824 / MB4) (Thermoanaerobacter tengcongensis).